We begin with the raw amino-acid sequence, 572 residues long: Probable transporter MCH1 (572 aa).

The segment covering 1-29 (MSSSAPDDTQASRLDADQISTRSSSYASD) has biased composition (polar residues). Residues 1-39 (MSSSAPDDTQASRLDADQISTRSSSYASDNDTDSTETRI) are disordered. N-linked (GlcNAc...) asparagine glycosylation is present at N30. Helical transmembrane passes span 50–70 (LLAFISANIIALACGSIVVFS), 89–109 (AVAISGSVALYLPISGVGYIC), 116–136 (PLALTGGILFGSGYGLAAGVY), 159–179 (FLMLSFVFVGVATCCLYMAAV), 193–213 (GLALATPITCFGLSPMWLSQA), 232–252 (VFRFFLFLAALTFFMGILGTF), 335–355 (LAFLLIVGPGEAFINNLGTII), 426–446 (FMAFFASMLSIGLLILASGLV), 459–479 (LVGAGYGAIFSLTPLMVTIIW), and 488–508 (YGLIGMLPAAGSTFWGLVYSA). The N-linked (GlcNAc...) asparagine glycan is linked to N515. A helical transmembrane segment spans residues 539 to 559 (PTYWAETITVWIAVGLLLWAW).

The protein belongs to the major facilitator superfamily.

It is found in the vacuole membrane. In terms of biological role, probable transporter. This is Probable transporter MCH1 (MCH1) from Gibberella zeae (strain ATCC MYA-4620 / CBS 123657 / FGSC 9075 / NRRL 31084 / PH-1) (Wheat head blight fungus).